A 562-amino-acid chain; its full sequence is MDDNKRPLYLPFAGPAILEAPLINKGSAFSEEERIFFNLEGLVPYAIETIEEQASRAYDQFRSFNNDLDKHIYLRNIQDTNETLFYRLVQNNISEMMPIIYTPTVGLACERFSKNYRRNRGLFISYPNKDRIDDILNNSTRQKVKIIVVTDGERILGLGDQGIGGMGIPIGKLSLYTSCGGISPAYTLPITLDVGTDNPQLLEDPMYMGWRHPRIGGEEYAEFIEAFMQAVHVRWPDTLIQFEDFAQKNAMPILERYKDRYCCFNDDIQGTAAVAVGSLLAACKAAGTELNQQRIAFLGAGSAGCGIAEAIVAQMVSEGISDEQARTQVCMVDRWGLLLDNMPNLLPFQQKLAQKCTNIQNWSNFSDNISLLDVVNNTKPTVLIGVSGVPGLFTEEIIRAMHSHCARPIIFPLSNPTSRVEATPKDILHWTSGQALVATGSPFEPVVVDGETYEIAQCNNSFIFPGIGLGVLASGARHVSDAMLMASSRALAECSPLAIDGSGPLLPKLEDIHAVSKHIAFAVGKVAVEQGLTLPMSDEILQQSIEGNFWSPEYRRYKRTSF.

Y101 (proton donor) is an active-site residue. R154 provides a ligand contact to NAD(+). K172 (proton acceptor) is an active-site residue. Residues E243, D244, and D267 each coordinate a divalent metal cation. NAD(+) is bound by residues D267 and N415.

This sequence belongs to the malic enzymes family. Homotetramer. The cofactor is Mg(2+). It depends on Mn(2+) as a cofactor.

The enzyme catalyses (S)-malate + NAD(+) = pyruvate + CO2 + NADH. The catalysed reaction is oxaloacetate + H(+) = pyruvate + CO2. In Shewanella baltica (strain OS155 / ATCC BAA-1091), this protein is NAD-dependent malic enzyme.